Here is a 182-residue protein sequence, read N- to C-terminus: Crossover junction endodeoxyribonuclease RuvC (182 aa).

Catalysis depends on residues aspartate 7, glutamate 69, and aspartate 141. Mg(2+)-binding residues include aspartate 7, glutamate 69, and aspartate 141.

The protein belongs to the RuvC family. As to quaternary structure, homodimer which binds Holliday junction (HJ) DNA. The HJ becomes 2-fold symmetrical on binding to RuvC with unstacked arms; it has a different conformation from HJ DNA in complex with RuvA. In the full resolvosome a probable DNA-RuvA(4)-RuvB(12)-RuvC(2) complex forms which resolves the HJ. Requires Mg(2+) as cofactor.

Its subcellular location is the cytoplasm. It carries out the reaction Endonucleolytic cleavage at a junction such as a reciprocal single-stranded crossover between two homologous DNA duplexes (Holliday junction).. In terms of biological role, the RuvA-RuvB-RuvC complex processes Holliday junction (HJ) DNA during genetic recombination and DNA repair. Endonuclease that resolves HJ intermediates. Cleaves cruciform DNA by making single-stranded nicks across the HJ at symmetrical positions within the homologous arms, yielding a 5'-phosphate and a 3'-hydroxyl group; requires a central core of homology in the junction. The consensus cleavage sequence is 5'-(A/T)TT(C/G)-3'. Cleavage occurs on the 3'-side of the TT dinucleotide at the point of strand exchange. HJ branch migration catalyzed by RuvA-RuvB allows RuvC to scan DNA until it finds its consensus sequence, where it cleaves and resolves the cruciform DNA. In Polaromonas naphthalenivorans (strain CJ2), this protein is Crossover junction endodeoxyribonuclease RuvC.